The sequence spans 125 residues: Large ribosomal subunit protein bL12 (125 aa).

The protein belongs to the bacterial ribosomal protein bL12 family. Homodimer. Part of the ribosomal stalk of the 50S ribosomal subunit. Forms a multimeric L10(L12)X complex, where L10 forms an elongated spine to which 2 to 4 L12 dimers bind in a sequential fashion. Binds GTP-bound translation factors.

In terms of biological role, forms part of the ribosomal stalk which helps the ribosome interact with GTP-bound translation factors. Is thus essential for accurate translation. The polypeptide is Large ribosomal subunit protein bL12 (Campylobacter jejuni subsp. jejuni serotype O:6 (strain 81116 / NCTC 11828)).